The primary structure comprises 604 residues: Transcriptional repressor rco-1 (604 aa).

Disordered regions lie at residues 87-110 and 124-264; these read RGGAPGNMNPPPQHPGQQQPPAIG and GGQA…DRLP. A compositionally biased stretch (pro residues) spans 144–163; the sequence is MPAPPGLQGPPPPPPPPSQQ. Composition is skewed to low complexity over residues 164–177 and 190–209; these read PPFQQQYQGPQGPG and PGPAGKRGIGRPPAGGPATP. Positions 210–229 are enriched in polar residues; the sequence is QINTPIPYNGGPAQSPQVPT. WD repeat units lie at residues 295–324, 342–372, 384–414, 425–455, 469–499, 523–553, and 565–600; these read QHESVVCCVRFSMDGKYVATGCNRSAQIYD, TGDLYIRSVCFSPDGKYLATGAEDKLIRVWD, GHEQDIYSLDFSRDGRTIASGSGDRTVRLWD, SIEDGVTTVAISPDKQFVAAGSLDKSVRVWD, GHKDSVYSVAFSPDGRNLVSGSLDKTIKMWE, GHRDFVLSVALTPDSQWVLSGSKDRGVQFWD, and GHKNSVISVAPSPVTGPNGVGYFATGSGDMRARIWS.

In terms of biological role, represses transcription by RNA polymerase II. May be involved at several stages of conidiation and other growth and development processes. Appears to regulate genes that are expressed in asexual and sexual spore pathways. This chain is Transcriptional repressor rco-1 (rco-1), found in Neurospora crassa (strain ATCC 24698 / 74-OR23-1A / CBS 708.71 / DSM 1257 / FGSC 987).